A 365-amino-acid polypeptide reads, in one-letter code: Eukaryotic translation initiation factor 3 subunit H (365 aa).

The MPN domain maps to 15–166 (ILLDSLVVMK…IRAWRLSTAA (152 aa)). Positions 276 to 295 (KRQQENESRLARGDPPLPMD) are disordered. A compositionally biased stretch (basic and acidic residues) spans 277–287 (RQQENESRLAR).

The protein belongs to the eIF-3 subunit H family. As to quaternary structure, component of the eukaryotic translation initiation factor 3 (eIF-3) complex.

It localises to the cytoplasm. In terms of biological role, component of the eukaryotic translation initiation factor 3 (eIF-3) complex, which is involved in protein synthesis of a specialized repertoire of mRNAs and, together with other initiation factors, stimulates binding of mRNA and methionyl-tRNAi to the 40S ribosome. The eIF-3 complex specifically targets and initiates translation of a subset of mRNAs involved in cell proliferation. The sequence is that of Eukaryotic translation initiation factor 3 subunit H from Caenorhabditis briggsae.